The following is a 349-amino-acid chain: uncharacterized protein (349 aa).

The first 26 residues, 1-26 (MQSHAGGSRAPLGLLLICLCLPGLFA), serve as a signal peptide directing secretion. 2 disordered regions span residues 30–113 (GAPE…QGMA) and 322–349 (YPAGSWGTKGQNRLPPGAKRPGSSGITP). Over residues 39 to 52 (HSGQPSFTSLLNPG) the composition is skewed to polar residues. Residues 90 to 101 (NGPPFWGPPPME) show a composition bias toward pro residues.

As to quaternary structure, binds to numerous extracellular matrix proteins.

Its subcellular location is the secreted. The protein resides in the extracellular space. It is found in the extracellular matrix. This is an uncharacterized protein from Mus musculus (Mouse).